Consider the following 312-residue polypeptide: Nucleosome assembly protein 1-like 4 (312 aa).

Positions 24 to 78 form a coiled coil; the sequence is VETLKNKLQALAEQHVDVLESLAPSVRKRVDVLMEIQSQHDELEVKFFEEKAALE. Residues 45 to 60 carry the Nuclear export signal motif; that stretch reads LAPSVRKRVDVLMEIQ. A disordered region spans residues 288-312; that stretch reads EDYGASWVDDEEEDDNDDEYSDEEA.

Belongs to the nucleosome assembly protein (NAP) family.

Its subcellular location is the nucleus. It localises to the cytoplasm. Functionally, may modulate chromatin structure by regulation of nucleosome assembly/disassembly. The polypeptide is Nucleosome assembly protein 1-like 4 (Oryza sativa subsp. indica (Rice)).